An 809-amino-acid chain; its full sequence is MSSQLVQFSTVPQIPNPPSRHRHFLSERNYIPANVYEHPAALLLERCSSLKELRQILPLVFKNGLYQEHFFQTKLVSLFCRYGSVDEAARVFEPIDSKLNVLYHTMLKGFAKVSDLDKALQFFVRMRYDDVEPVVYNFTYLLKVCGDEAELRVGKEIHGLLVKSGFSLDLFAMTGLENMYAKCRQVNEARKVFDRMPERDLVSWNTIVAGYSQNGMARMALEMVKSMCEENLKPSFITIVSVLPAVSALRLISVGKEIHGYAMRSGFDSLVNISTALVDMYAKCGSLETARQLFDGMLERNVVSWNSMIDAYVQNENPKEAMLIFQKMLDEGVKPTDVSVMGALHACADLGDLERGRFIHKLSVELGLDRNVSVVNSLISMYCKCKEVDTAASMFGKLQSRTLVSWNAMILGFAQNGRPIDALNYFSQMRSRTVKPDTFTYVSVITAIAELSITHHAKWIHGVVMRSCLDKNVFVTTALVDMYAKCGAIMIARLIFDMMSERHVTTWNAMIDGYGTHGFGKAALELFEEMQKGTIKPNGVTFLSVISACSHSGLVEAGLKCFYMMKENYSIELSMDHYGAMVDLLGRAGRLNEAWDFIMQMPVKPAVNVYGAMLGACQIHKNVNFAEKAAERLFELNPDDGGYHVLLANIYRAASMWEKVGQVRVSMLRQGLRKTPGCSMVEIKNEVHSFFSGSTAHPDSKKIYAFLEKLICHIKEAGYVPDTNLVLGVENDVKEQLLSTHSEKLAISFGLLNTTAGTTIHVRKNLRVCADCHNATKYISLVTGREIVVRDMQRFHHFKNGACSCGDYW.

A chloroplast-targeting transit peptide spans 1–46; sequence MSSQLVQFSTVPQIPNPPSRHRHFLSERNYIPANVYEHPAALLLER. PPR repeat units follow at residues 68–98, 99–133, 134–168, 169–199, 200–234, 235–269, 270–300, 301–335, 336–370, 371–401, 402–436, 437–471, 472–502, 503–537, 538–568, and 574–604; these read EHFF…IDSK, LNVL…DVEP, VVYN…GFSL, DLFA…MPER, DLVS…NLKP, SFIT…GFDS, LVNI…MLER, NVVS…GVKP, TDVS…GLDR, NVSV…LQSR, TLVS…TVKP, DTFT…CLDK, NVFV…MSER, HVTT…TIKP, NGVT…MKEN, and SMDH…MPVK. The interval 609–684 is type E motif; it reads VYGAMLGACQ…TPGCSMVEIK (76 aa). A type E(+) motif region spans residues 685–715; that stretch reads NEVHSFFSGSTAHPDSKKIYAFLEKLICHIK. Residues 716-809 are type DYW motif; sequence EAGYVPDTNL…NGACSCGDYW (94 aa).

The protein belongs to the PPR family. PCMP-H subfamily.

It localises to the plastid. The protein resides in the chloroplast. Involved in multiple sites RNA editing events in chloroplasts. Involved in the editing of the site 7 of ndhB (ndhB-7) and site 5 of ndhD (ndhD-5) transcripts, which are two plastid-encoded subunits of the chloroplast NAD(P)H dehydrogenase (NDH) complex. Involved in the editing of the site 3 of rpoB (rpoB-3) transcript. Required for the activity of the NDH complex of the photosynthetic electron transport chain. Possesses low endoribonuclease activity in vitro. This is Pentatricopeptide repeat-containing protein At1g11290, chloroplastic (PCMP-H40) from Arabidopsis thaliana (Mouse-ear cress).